A 379-amino-acid chain; its full sequence is Protein PatA (379 aa).

Residues 181-226 form a disordered region; it reads RREASSQEISSSTEHNQIPVNNRRSTKFTSPPHTQPKPEPRLPQIN. The span at 186–212 shows a compositional bias: polar residues; it reads SQEISSSTEHNQIPVNNRRSTKFTSPP. The region spanning 262–378 is the Response regulatory domain; it reads TIFCIDENPI…DLLKVIFKHI (117 aa). The residue at position 313 (Asp313) is a 4-aspartylphosphate.

The protein localises to the cell septum. Its function is as follows. Controls heterocyst pattern formation. Required for the differentiation of intercalary heterocysts but not for terminal heterocysts. In Nostoc sp. (strain PCC 7120 / SAG 25.82 / UTEX 2576), this protein is Protein PatA (patA).